Consider the following 189-residue polypeptide: Peptidyl-tRNA hydrolase (189 aa).

TRNA is bound at residue Tyr-15. His-20 (proton acceptor) is an active-site residue. Positions 64 and 66 each coordinate tRNA.

This sequence belongs to the PTH family. As to quaternary structure, monomer.

Its subcellular location is the cytoplasm. It catalyses the reaction an N-acyl-L-alpha-aminoacyl-tRNA + H2O = an N-acyl-L-amino acid + a tRNA + H(+). Functionally, hydrolyzes ribosome-free peptidyl-tRNAs (with 1 or more amino acids incorporated), which drop off the ribosome during protein synthesis, or as a result of ribosome stalling. Its function is as follows. Catalyzes the release of premature peptidyl moieties from peptidyl-tRNA molecules trapped in stalled 50S ribosomal subunits, and thus maintains levels of free tRNAs and 50S ribosomes. The polypeptide is Peptidyl-tRNA hydrolase (Persephonella marina (strain DSM 14350 / EX-H1)).